The chain runs to 485 residues: Aspartyl/glutamyl-tRNA(Asn/Gln) amidotransferase subunit B (485 aa).

This sequence belongs to the GatB/GatE family. GatB subfamily. As to quaternary structure, heterotrimer of A, B and C subunits.

The catalysed reaction is L-glutamyl-tRNA(Gln) + L-glutamine + ATP + H2O = L-glutaminyl-tRNA(Gln) + L-glutamate + ADP + phosphate + H(+). It catalyses the reaction L-aspartyl-tRNA(Asn) + L-glutamine + ATP + H2O = L-asparaginyl-tRNA(Asn) + L-glutamate + ADP + phosphate + 2 H(+). In terms of biological role, allows the formation of correctly charged Asn-tRNA(Asn) or Gln-tRNA(Gln) through the transamidation of misacylated Asp-tRNA(Asn) or Glu-tRNA(Gln) in organisms which lack either or both of asparaginyl-tRNA or glutaminyl-tRNA synthetases. The reaction takes place in the presence of glutamine and ATP through an activated phospho-Asp-tRNA(Asn) or phospho-Glu-tRNA(Gln). This chain is Aspartyl/glutamyl-tRNA(Asn/Gln) amidotransferase subunit B, found in Gluconobacter oxydans (strain 621H) (Gluconobacter suboxydans).